A 309-amino-acid chain; its full sequence is Vomeronasal type-1 receptor 46 (309 aa).

Topologically, residues 1–20 are extracellular; sequence MNKANIFCTDTNMKVILFSE. A helical transmembrane segment spans residues 21–41; the sequence is VSVGISANSILFISHLCMFLG. Residues 42 to 50 are Cytoplasmic-facing; sequence ESRPKPIDL. A helical membrane pass occupies residues 51 to 71; it reads YIAFFSLTHLMLLVTMGLIAV. The Extracellular portion of the chain corresponds to 72–85; that stretch reads DMFMPGGRWDSTTC. Residues C85 and C171 are joined by a disulfide bond. The helical transmembrane segment at 86–106 threads the bilayer; that stretch reads TFLMYLHIVLRGPTLCATCLL. Topologically, residues 107–134 are cytoplasmic; the sequence is NVLWTITLSPRNSCLTKFKHKSPHHISG. Residues 135 to 155 traverse the membrane as a helical segment; it reads AFLFLCVLYMSLSSELLSITA. Topologically, residues 156 to 192 are extracellular; that stretch reads SLNLTSENFLYVSQSCSILPMSYSIKSMFSTKMAIRE. N-linked (GlcNAc...) asparagine glycosylation is present at N158. The chain crosses the membrane as a helical span at residues 193–213; sequence AFLIGLMVLSSGYMVALLWSH. The Cytoplasmic segment spans residues 214–237; the sequence is KKQAQHLHSNSLSLKASPEQRATR. The helical transmembrane segment at 238-258 threads the bilayer; sequence TIMLLMSFFVVFYILDSVIFY. Topologically, residues 259 to 267 are extracellular; that stretch reads SRMKFKDDS. The chain crosses the membrane as a helical span at residues 268 to 288; the sequence is IFVCVQIIVSHSYVTVSPFVF. Residues 289–309 lie on the Cytoplasmic side of the membrane; sequence ICTEKHIIKFFWSLCGRIVNI.

This sequence belongs to the G-protein coupled receptor 1 family.

The protein resides in the cell membrane. Its function is as follows. Putative pheromone receptor implicated in the regulation of social and reproductive behavior. The sequence is that of Vomeronasal type-1 receptor 46 (Vmn1r46) from Mus musculus (Mouse).